A 561-amino-acid polypeptide reads, in one-letter code: Microtubule-associated protein VP6 (561 aa).

In terms of assembly, interacts with VP2.

The protein localises to the virion. It localises to the host cytoplasm. The protein resides in the host cytoskeleton. In terms of biological role, minor inner capsid component. Displays NTPase and RNA 5'-triphosphatase (RTPase) activities. May function as a cofactor of polymerase VP2. Associates with microtubules and plays a role in the formation, structural organization and morphology of viral inclusions, where the assembly of cores and the replication of viral RNA occur. The chain is Microtubule-associated protein VP6 (S6) from Lymantria dispar cypovirus 1 (isolate Rao) (LdCPV-1).